We begin with the raw amino-acid sequence, 598 residues long: IQ calmodulin-binding motif-containing protein 1 (598 aa).

The segment at 1–157 (MKPAGTDPRI…SLFWLLGGHV (157 aa)) is interaction with BBS1, BBS8 and BBS9. Positions 287 to 598 (QEVEEQKLHK…MLFIGGTKPP (312 aa)) are interaction with CEP290, BBS1, BBS2, BBS4, BBS5, BBS7, BBS8 and BBS9. IQ domains are found at residues 294 to 317 (LHKA…LKKL), 318 to 338 (PSAV…MMLE), 387 to 416 (EEKS…SLTE), and 417 to 437 (YKAA…CRKK). Positions 336–362 (MLELNRQKEEEDLRLKLQLQRQRAMRL) form a coiled coil. Residues 530–598 (AEGKEPEQFL…MLFIGGTKPP (69 aa)) are interaction with BBS1, BBS2, BBS4, BBS7, BBS8 and BBS9.

In terms of assembly, interacts with calmodulin. Interacts with CEP290/NPHP6; IQCB1/NPHP5 and CEP290/NPHP6; are proposed to form a functional NPHP5-6 module localized to the centrosome. Interacts with ATXN10. Interacts with NPHP1, INVS, NPHP4 and RPGRIP1L; these interactions likely require additional interactors. Associates with the BBSome complex; interacts with BBS1, BBS2, BBS4, BBS5, BBS7, BBS8 and BBS9. As to expression, localized to the outer segment and connecting cilia of photoreceptor cells.

It localises to the cytoplasm. Its subcellular location is the cytoskeleton. It is found in the microtubule organizing center. The protein localises to the centrosome. Its function is as follows. Involved in ciliogenesis. The function in an early step in cilia formation depends on its association with CEP290/NPHP6. Involved in regulation of the BBSome complex integrity, specifically for presence of BBS2 and BBS5 in the complex, and in ciliary targeting of selected BBSome cargos. May play a role in controlling entry of the BBSome complex to cilia possibly implicating CEP290/NPHP6. This chain is IQ calmodulin-binding motif-containing protein 1 (Iqcb1), found in Mus musculus (Mouse).